A 50-amino-acid polypeptide reads, in one-letter code: Temporin-SHb (50 aa).

Residues 1–10 (FLGTINLSLC) form the signal peptide. The propeptide occupies 11-35 (EQERDADEEERRDEPDESDVEVEKR). Residues 12-31 (QERDADEEERRDEPDESDVE) form a disordered region. Acidic residues predominate over residues 14-30 (RDADEEERRDEPDESDV). Leucine 48 bears the Leucine amide mark.

This sequence belongs to the frog skin active peptide (FSAP) family. Temporin subfamily. As to expression, expressed by the skin glands.

The protein resides in the secreted. Its function is as follows. Amphipathic alpha-helical peptide with no antimicrobial activity. Does not display anti-leishmania activity. Does not show hemolytic activity (LC(50)&gt;116 uM). The sequence is that of Temporin-SHb from Pelophylax saharicus (Sahara frog).